Consider the following 313-residue polypeptide: Recombination-promoting nuclease pSLT051 (313 aa).

Belongs to the Rpn/YhgA-like nuclease family.

In terms of biological role, a low activity DNA endonuclease probably yielding 3'-hydroxyl ends. Involved in RecA-independent recombination and horizontal gene transfer. In Salmonella typhimurium (strain LT2 / SGSC1412 / ATCC 700720), this protein is Recombination-promoting nuclease pSLT051.